A 1009-amino-acid chain; its full sequence is Delphilin (1009 aa).

Disordered stretches follow at residues 28–82 (CRSK…SNTM), 170–193 (EGPVDYPQSDSEPEETPSAPRSRS), 322–369 (ASPD…SRDT), 414–635 (ELSS…SDNN), and 990–1009 (SETQGTENPKSPRIASPLAW). Basic and acidic residues predominate over residues 44–53 (RSQDHHERPQ). A PDZ domain is found at 95 to 172 (TIRVYRGKKS…MPSLVVEEGP (78 aa)). The span at 322–332 (ASPDSVDSNPY) shows a compositional bias: polar residues. Low complexity-rich tracts occupy residues 334 to 352 (SLDSPPASPLPSDELSPLP) and 427 to 439 (DDSTSVSYSSGSD). 3 stretches are compositionally biased toward pro residues: residues 441–455 (IPPPPQSPPPPPPPL), 462–477 (SPLPITPEHLPQPPPA), and 484–493 (IAPPPPPPRP). Over residues 521-535 (SSPQPSSQPILQLHQ) the composition is skewed to low complexity. Residues 557–602 (AQHTRLQHPSQSIYQSQQTTVPRTSPSLTKQKSLHSQPSQQSFEGT) show a composition bias toward polar residues. Residues 607–628 (VPPPPPPPLPPPCDPPPLPKPS) show a composition bias toward pro residues. In terms of domain architecture, FH2 spans 629-1009 (PKASDNNHMS…SPRIASPLAW (381 aa)).

It localises to the postsynaptic cell membrane. In terms of biological role, postsynaptic scaffolding protein. This is Delphilin (grid2ip) from Danio rerio (Zebrafish).